The chain runs to 916 residues: Oxysterol-binding protein 2 (916 aa).

Disordered stretches follow at residues 1–20 (MGKA…SRGL), 34–121 (TAAP…PFTK), and 139–163 (PESG…TPLG). Residues 49–58 (EPKPQPQPVP) are compositionally biased toward pro residues. Low complexity predominate over residues 79–92 (RSEPVSETTSEPEP). Residues 99-113 (ELLQGSRPGSESSSG) show a composition bias toward polar residues. Over residues 144-155 (LPALKPLPLLRP) the composition is skewed to low complexity. The 93-residue stretch at 182–274 (LDSFEGWLLK…WITALELAKA (93 aa)) folds into the PH domain. Disordered regions lie at residues 282–301 (THSD…DKSE) and 417–448 (FHSA…EEDE). Ser287 bears the Phosphoserine mark. A Phosphoserine modification is found at Ser763. Residues 813 to 842 (EGVAPTDSRLRPDQRLMEKGRWDEANTEKQ) form a disordered region.

Belongs to the OSBP family. In terms of assembly, interacts with CCDC159. As to expression, expressed mainly in retina, testis, and fetal liver.

Its subcellular location is the membrane. It is found in the cytoplasmic vesicle. The protein resides in the secretory vesicle. The protein localises to the acrosome. Its function is as follows. Binds 7-ketocholesterol. Acts during spermatid development where its function is required prior to the removal of cytoplasm from the sperm head. In Homo sapiens (Human), this protein is Oxysterol-binding protein 2 (OSBP2).